A 233-amino-acid chain; its full sequence is UPF0758 protein SRU_2338 (233 aa).

The MPN domain occupies 110–232 (QVTCPADVAD…HTSLAERGVI (123 aa)). Histidine 181, histidine 183, and aspartate 194 together coordinate Zn(2+). The JAMM motif signature appears at 181–194 (HNHPSGNPEPSRED).

The protein belongs to the UPF0758 family.

The protein is UPF0758 protein SRU_2338 of Salinibacter ruber (strain DSM 13855 / M31).